Reading from the N-terminus, the 189-residue chain is Pyridoxal 5'-phosphate synthase subunit PdxT (189 aa).

50-52 (GES) is an L-glutamine binding site. Catalysis depends on cysteine 80, which acts as the Nucleophile. Residues arginine 107 and 134 to 135 (IR) contribute to the L-glutamine site. Catalysis depends on charge relay system residues histidine 169 and glutamate 171.

The protein belongs to the glutaminase PdxT/SNO family. As to quaternary structure, in the presence of PdxS, forms a dodecamer of heterodimers. Only shows activity in the heterodimer.

The enzyme catalyses aldehydo-D-ribose 5-phosphate + D-glyceraldehyde 3-phosphate + L-glutamine = pyridoxal 5'-phosphate + L-glutamate + phosphate + 3 H2O + H(+). The catalysed reaction is L-glutamine + H2O = L-glutamate + NH4(+). It participates in cofactor biosynthesis; pyridoxal 5'-phosphate biosynthesis. In terms of biological role, catalyzes the hydrolysis of glutamine to glutamate and ammonia as part of the biosynthesis of pyridoxal 5'-phosphate. The resulting ammonia molecule is channeled to the active site of PdxS. This chain is Pyridoxal 5'-phosphate synthase subunit PdxT, found in Picrophilus torridus (strain ATCC 700027 / DSM 9790 / JCM 10055 / NBRC 100828 / KAW 2/3).